Here is a 248-residue protein sequence, read N- to C-terminus: Pyridoxine 5'-phosphate synthase (248 aa).

3-amino-2-oxopropyl phosphate is bound at residue N12. Position 14–15 (14–15 (DH)) interacts with 1-deoxy-D-xylulose 5-phosphate. R23 is a binding site for 3-amino-2-oxopropyl phosphate. The active-site Proton acceptor is the H48. R50 and H55 together coordinate 1-deoxy-D-xylulose 5-phosphate. E75 (proton acceptor) is an active-site residue. 1-deoxy-D-xylulose 5-phosphate is bound at residue T105. The active-site Proton donor is H196. Residues G197 and 218 to 219 (GH) each bind 3-amino-2-oxopropyl phosphate.

It belongs to the PNP synthase family. In terms of assembly, homooctamer; tetramer of dimers.

It localises to the cytoplasm. The catalysed reaction is 3-amino-2-oxopropyl phosphate + 1-deoxy-D-xylulose 5-phosphate = pyridoxine 5'-phosphate + phosphate + 2 H2O + H(+). It functions in the pathway cofactor biosynthesis; pyridoxine 5'-phosphate biosynthesis; pyridoxine 5'-phosphate from D-erythrose 4-phosphate: step 5/5. Its function is as follows. Catalyzes the complicated ring closure reaction between the two acyclic compounds 1-deoxy-D-xylulose-5-phosphate (DXP) and 3-amino-2-oxopropyl phosphate (1-amino-acetone-3-phosphate or AAP) to form pyridoxine 5'-phosphate (PNP) and inorganic phosphate. The polypeptide is Pyridoxine 5'-phosphate synthase (Pseudomonas paraeruginosa (strain DSM 24068 / PA7) (Pseudomonas aeruginosa (strain PA7))).